A 380-amino-acid polypeptide reads, in one-letter code: Lipid-A-disaccharide synthase (380 aa).

It belongs to the LpxB family.

It carries out the reaction a lipid X + a UDP-2-N,3-O-bis[(3R)-3-hydroxyacyl]-alpha-D-glucosamine = a lipid A disaccharide + UDP + H(+). The protein operates within bacterial outer membrane biogenesis; LPS lipid A biosynthesis. Functionally, condensation of UDP-2,3-diacylglucosamine and 2,3-diacylglucosamine-1-phosphate to form lipid A disaccharide, a precursor of lipid A, a phosphorylated glycolipid that anchors the lipopolysaccharide to the outer membrane of the cell. In Rickettsia typhi (strain ATCC VR-144 / Wilmington), this protein is Lipid-A-disaccharide synthase.